An 85-amino-acid polypeptide reads, in one-letter code: Large ribosomal subunit protein bL27 (85 aa).

Residues 1-22 are disordered; that stretch reads MAHKKAGGSTKNGRDSESKRLG.

This sequence belongs to the bacterial ribosomal protein bL27 family.

The protein is Large ribosomal subunit protein bL27 of Alteromonas mediterranea (strain DSM 17117 / CIP 110805 / LMG 28347 / Deep ecotype).